Consider the following 511-residue polypeptide: V-type proton ATPase subunit B, brain isoform (511 aa).

An ATP-binding site is contributed by Arg-400.

Belongs to the ATPase alpha/beta chains family. In terms of assembly, V-ATPase is a heteromultimeric enzyme made up of two complexes: the ATP-hydrolytic V1 complex and the proton translocation V0 complex. The V1 complex consists of three catalytic AB heterodimers that form a heterohexamer, three peripheral stalks each consisting of EG heterodimers, one central rotor including subunits D and F, and the regulatory subunits C and H. The proton translocation complex V0 consists of the proton transport subunit a, a ring of proteolipid subunits c9c'', rotary subunit d, subunits e and f, and the accessory subunits ATP6AP1/Ac45 and ATP6AP2/PRR.

Its subcellular location is the apical cell membrane. It localises to the melanosome. It is found in the cytoplasm. The protein resides in the cytoplasmic vesicle. The protein localises to the secretory vesicle. Its subcellular location is the synaptic vesicle membrane. It localises to the clathrin-coated vesicle membrane. Non-catalytic subunit of the V1 complex of vacuolar(H+)-ATPase (V-ATPase), a multisubunit enzyme composed of a peripheral complex (V1) that hydrolyzes ATP and a membrane integral complex (V0) that translocates protons. V-ATPase is responsible for acidifying and maintaining the pH of intracellular compartments and in some cell types, is targeted to the plasma membrane, where it is responsible for acidifying the extracellular environment. In renal intercalated cells, can partially compensate the lack of ATP6V1B1 and mediate secretion of protons (H+) into the urine under base-line conditions but not in conditions of acid load. In Pongo abelii (Sumatran orangutan), this protein is V-type proton ATPase subunit B, brain isoform (ATP6V1B2).